The chain runs to 1304 residues: NAD-dependent protein deacetylase Sir2B (1304 aa).

Positions 28-466 (TEEEKKKVKE…LISIHNIKMK (439 aa)) constitute a Deacetylase sirtuin-type domain. NAD(+)-binding positions include 53–72 (GAGI…TGIW) and 274–277 (QNID). H294 (proton acceptor) is an active-site residue. Residues C302, C305, C327, and C330 each contribute to the Zn(2+) site. Residues 371–373 (GSS), 399–401 (NYQ), and V417 contribute to the NAD(+) site. Disordered stretches follow at residues 545 to 585 (EHNN…SSSI), 749 to 827 (KVKS…DKDN), and 1154 to 1203 (EIKY…DDNN). Composition is skewed to low complexity over residues 548 to 585 (NNNN…SSSI), 756 to 806 (NNNN…ISDH), and 1182 to 1203 (DDNN…DDNN).

This sequence belongs to the sirtuin family. Class IV subfamily. It depends on Zn(2+) as a cofactor.

It carries out the reaction N(6)-acetyl-L-lysyl-[protein] + NAD(+) + H2O = 2''-O-acetyl-ADP-D-ribose + nicotinamide + L-lysyl-[protein]. Regulates the expression of the surface antigen-coding var genes central to the malaria pathogenesis. Cooperates with Sir2A to mediate silencing and mutual exclusive expression of only 1 of the 60 subtelomeric var genes at a time, coding for functionally different but epitopically variant versions of the erythrocyte membrane protein 1 (PfEMP1) molecule, to evade the detection by host immune surveillance. This Plasmodium falciparum (isolate 3D7) protein is NAD-dependent protein deacetylase Sir2B.